Reading from the N-terminus, the 272-residue chain is Putative phosphoenolpyruvate synthase regulatory protein (272 aa).

152–159 (GVSRCGKT) contributes to the ADP binding site.

Belongs to the pyruvate, phosphate/water dikinase regulatory protein family. PSRP subfamily.

It catalyses the reaction [pyruvate, water dikinase] + ADP = [pyruvate, water dikinase]-phosphate + AMP + H(+). It carries out the reaction [pyruvate, water dikinase]-phosphate + phosphate + H(+) = [pyruvate, water dikinase] + diphosphate. Functionally, bifunctional serine/threonine kinase and phosphorylase involved in the regulation of the phosphoenolpyruvate synthase (PEPS) by catalyzing its phosphorylation/dephosphorylation. In Pseudomonas putida (strain W619), this protein is Putative phosphoenolpyruvate synthase regulatory protein.